The chain runs to 351 residues: Porphobilinogen deaminase (351 aa).

Residue cysteine 242 is modified to S-(dipyrrolylmethanemethyl)cysteine.

It belongs to the HMBS family. Monomer. The cofactor is dipyrromethane.

It catalyses the reaction 4 porphobilinogen + H2O = hydroxymethylbilane + 4 NH4(+). It functions in the pathway porphyrin-containing compound metabolism; protoporphyrin-IX biosynthesis; coproporphyrinogen-III from 5-aminolevulinate: step 2/4. Functionally, tetrapolymerization of the monopyrrole PBG into the hydroxymethylbilane pre-uroporphyrinogen in several discrete steps. The sequence is that of Porphobilinogen deaminase from Rickettsia rickettsii (strain Sheila Smith).